We begin with the raw amino-acid sequence, 123 residues long: Small ribosomal subunit protein uS12 (123 aa).

Asp-89 carries the post-translational modification 3-methylthioaspartic acid. The disordered stretch occupies residues 100 to 123 (GSLDTSGVKDRKQGRSKYGAKRPK). The span at 113-123 (GRSKYGAKRPK) shows a compositional bias: basic residues.

Belongs to the universal ribosomal protein uS12 family. As to quaternary structure, part of the 30S ribosomal subunit. Contacts proteins S8 and S17. May interact with IF1 in the 30S initiation complex.

In terms of biological role, with S4 and S5 plays an important role in translational accuracy. Functionally, interacts with and stabilizes bases of the 16S rRNA that are involved in tRNA selection in the A site and with the mRNA backbone. Located at the interface of the 30S and 50S subunits, it traverses the body of the 30S subunit contacting proteins on the other side and probably holding the rRNA structure together. The combined cluster of proteins S8, S12 and S17 appears to hold together the shoulder and platform of the 30S subunit. The protein is Small ribosomal subunit protein uS12 of Pseudomonas aeruginosa (strain LESB58).